The primary structure comprises 42 residues: Photosystem I reaction center subunit IX (42 aa).

A helical membrane pass occupies residues 7 to 27 (YLSTAPVLATLWFGFLAGLLI).

It belongs to the PsaJ family.

Its subcellular location is the plastid. It is found in the chloroplast thylakoid membrane. Its function is as follows. May help in the organization of the PsaE and PsaF subunits. This is Photosystem I reaction center subunit IX from Anthoceros angustus (Hornwort).